The chain runs to 321 residues: Endochitinase 33 (321 aa).

The signal sequence occupies residues 1–19; it reads MPSLTALASLLALVPSALA. The GH18 domain occupies 27–321; that stretch reads QNIAVYWGQN…FETQVVNALR (295 aa). The active-site Proton donor is the glutamate 167.

This sequence belongs to the glycosyl hydrolase 18 family. Chitinase class III subfamily. Monomer.

The protein localises to the secreted. It catalyses the reaction Random endo-hydrolysis of N-acetyl-beta-D-glucosaminide (1-&gt;4)-beta-linkages in chitin and chitodextrins.. In terms of biological role, secreted chitinase involved in the degradation of chitin, a component of the cell walls of fungi and exoskeletal elements of some animals (including worms and arthropods). Plays a morphogenetic role during apical growth, cell division and differentiation (cell wall morphogenesis). May be involved in the degradation and further assimilation of phytopathogenic fungi, namely mycoparasitism, the major mechanism accounting for the antagonistic activity against phytopathogenic fungi displayed by Trichoderma. The sequence is that of Endochitinase 33 (chit33) from Trichoderma harzianum (Hypocrea lixii).